A 214-amino-acid polypeptide reads, in one-letter code: MSEEDKTAASAEQPKRAPKLNERILSSLSRRSVAAHPWHDLEIGPDAPAVFNVVVEITKGSKVKYELDKKTGLIKVDRVLYSSVVYPHNYGFVPRTLCEDNDPMDVLVLMQEPVVPGSFLRARAIGLMPMIDQGEKDDKIIAVCADDPEYRHYNDISELSPHRLQEIKRFFEDYKKNENKEVAVDAFLPATTAREAIQYSMDLYAQYILQSLRQ.

The disordered stretch occupies residues 1–20 (MSEEDKTAASAEQPKRAPKL). Positions 64, 78, and 90 each coordinate substrate. Residues Asp-100, Asp-105, and Asp-137 each coordinate Mg(2+). Position 174 (Tyr-174) interacts with substrate.

It belongs to the PPase family. The cofactor is Mg(2+).

It is found in the cytoplasm. The enzyme catalyses diphosphate + H2O = 2 phosphate + H(+). In Zea mays (Maize), this protein is Soluble inorganic pyrophosphatase (IPP).